A 270-amino-acid chain; its full sequence is Glucosamine-6-phosphate deaminase (270 aa).

The active-site Proton acceptor; for enolization step is Asp-68. Catalysis depends on Asp-145, which acts as the For ring-opening step. His-147 acts as the Proton acceptor; for ring-opening step in catalysis. Catalysis depends on Glu-152, which acts as the For ring-opening step.

Belongs to the glucosamine/galactosamine-6-phosphate isomerase family. NagB subfamily.

The catalysed reaction is alpha-D-glucosamine 6-phosphate + H2O = beta-D-fructose 6-phosphate + NH4(+). It participates in amino-sugar metabolism; N-acetylneuraminate degradation; D-fructose 6-phosphate from N-acetylneuraminate: step 5/5. Its function is as follows. Catalyzes the reversible isomerization-deamination of glucosamine 6-phosphate (GlcN6P) to form fructose 6-phosphate (Fru6P) and ammonium ion. The protein is Glucosamine-6-phosphate deaminase of Bifidobacterium longum (strain NCC 2705).